A 262-amino-acid polypeptide reads, in one-letter code: MKIALGIEYDGSRYFGWQRQDEVESVQQKLEEALSIVANAPIEVFCAGRTDSGVHGTGQVVHFETQAIRPLQSWCFGTNANLPDDIAVKWAVEVSEDFHARFSATARRYRYIIFNNKLRSAILPKGVSHYHYALDHQKMHVAGQFLLGENDFSSFRAAKCQSHTPWRNVHHLNVSRLGNYIVVDIQANAFVHHMVRNIVESLIEVGQGRQPVEWIQWLLAQRDRTLAAPTAKAEGLYLVDVHYPERFGIPKTALGPLFLADN.

Asp51 (nucleophile) is an active-site residue. Tyr109 contacts substrate.

It belongs to the tRNA pseudouridine synthase TruA family. Homodimer.

The enzyme catalyses uridine(38/39/40) in tRNA = pseudouridine(38/39/40) in tRNA. Formation of pseudouridine at positions 38, 39 and 40 in the anticodon stem and loop of transfer RNAs. This is tRNA pseudouridine synthase A from Actinobacillus pleuropneumoniae serotype 5b (strain L20).